Reading from the N-terminus, the 249-residue chain is Pyridoxine 5'-phosphate synthase (249 aa).

Asn7 contributes to the 3-amino-2-oxopropyl phosphate binding site. 1-deoxy-D-xylulose 5-phosphate is bound at residue 9–10 (DH). 3-amino-2-oxopropyl phosphate is bound at residue Arg18. His43 acts as the Proton acceptor in catalysis. Arg45 and His50 together coordinate 1-deoxy-D-xylulose 5-phosphate. Glu70 acts as the Proton acceptor in catalysis. Position 100 (Thr100) interacts with 1-deoxy-D-xylulose 5-phosphate. His190 serves as the catalytic Proton donor. 3-amino-2-oxopropyl phosphate contacts are provided by residues Gly191 and 212–213 (GH).

Belongs to the PNP synthase family. In terms of assembly, homooctamer; tetramer of dimers.

It localises to the cytoplasm. The catalysed reaction is 3-amino-2-oxopropyl phosphate + 1-deoxy-D-xylulose 5-phosphate = pyridoxine 5'-phosphate + phosphate + 2 H2O + H(+). The protein operates within cofactor biosynthesis; pyridoxine 5'-phosphate biosynthesis; pyridoxine 5'-phosphate from D-erythrose 4-phosphate: step 5/5. In terms of biological role, catalyzes the complicated ring closure reaction between the two acyclic compounds 1-deoxy-D-xylulose-5-phosphate (DXP) and 3-amino-2-oxopropyl phosphate (1-amino-acetone-3-phosphate or AAP) to form pyridoxine 5'-phosphate (PNP) and inorganic phosphate. In Synechococcus sp. (strain CC9605), this protein is Pyridoxine 5'-phosphate synthase.